An 80-amino-acid polypeptide reads, in one-letter code: SPI-1 type 3 secretion system needle filament protein (80 aa).

The protein belongs to the SctF family. In terms of assembly, the core secretion machinery of the T3SS is composed of approximately 20 different proteins, including cytoplasmic components, a base, an export apparatus and a needle. This subunit polymerizes and forms the helical needle filament. Interacts with the needle tip protein SipD/SctA. Interacts with the needle adapter protein PrgJ/SctI, the secretin InvG/SctC and the minor export apparatus protein SpaP/SctR. In vitro, the needle protomer refolds spontaneously to extend the needle from the distal end.

The protein resides in the secreted. It is found in the cell surface. Its activity is regulated as follows. Binding of bile salts, including deoxycholate, to the PrgI:SipD interface may inhibit the T3SS function. In terms of biological role, component of the type III secretion system (T3SS), also called injectisome, which is used to inject bacterial effector proteins into eukaryotic host cells. PrgI/SctF1 forms the external needle filament that protrudes from the bacterial surface. Is probably involved in the transduction of an activating signal, thought to be mediated by the distal tip of the needle filament, to the secretion machine. Required for invasion of epithelial cells. Required for the secretion of the effector protein SptP. During infection, can induce innate immune responses. The needle proteins interact with host TLR2 or TLR4, and induce signaling by NF-kappa-B and/or AP-1. This activation is MyD88 dependent and results in increased expression of cytokines, including TNF-alpha, IL-6 and IL-8. This chain is SPI-1 type 3 secretion system needle filament protein, found in Salmonella typhimurium (strain LT2 / SGSC1412 / ATCC 700720).